The primary structure comprises 401 residues: 3-oxoadipyl-CoA/3-oxo-5,6-dehydrosuberyl-CoA thiolase (401 aa).

The Acyl-thioester intermediate role is filled by Cys-90. Catalysis depends on proton acceptor residues His-357 and Cys-387.

Belongs to the thiolase-like superfamily. Thiolase family.

It catalyses the reaction succinyl-CoA + acetyl-CoA = 3-oxoadipyl-CoA + CoA. It carries out the reaction 2,3-didehydroadipoyl-CoA + acetyl-CoA = 3-oxo-5,6-didehydrosuberyl-CoA + CoA. It participates in aromatic compound metabolism; phenylacetate degradation. Catalyzes the thiolytic cleavage of the beta-keto C8 intermediate 3-oxo-5,6-dehydrosuberyl-CoA with CoA to yield the C6 intermediate 2,3-dehydroadipyl-CoA and acetyl-CoA. Besides it catalyzes also the last step of the pathway, in which 3-oxoadipyl-CoA similarly is cleaved to acetyl-CoA and succinyl-CoA. The protein is 3-oxoadipyl-CoA/3-oxo-5,6-dehydrosuberyl-CoA thiolase (paaJ) of Escherichia coli (strain K12).